A 210-amino-acid polypeptide reads, in one-letter code: Large ribosomal subunit protein uL4 (210 aa).

Residues 46 to 77 (QGTHKSKERGEIAGSTKKIKKQKGTGTARAGS) form a disordered region.

Belongs to the universal ribosomal protein uL4 family. Part of the 50S ribosomal subunit.

One of the primary rRNA binding proteins, this protein initially binds near the 5'-end of the 23S rRNA. It is important during the early stages of 50S assembly. It makes multiple contacts with different domains of the 23S rRNA in the assembled 50S subunit and ribosome. Functionally, forms part of the polypeptide exit tunnel. In Amoebophilus asiaticus (strain 5a2), this protein is Large ribosomal subunit protein uL4.